The primary structure comprises 154 residues: Cold shock domain-containing protein C2 (154 aa).

The residue at position 19 (Ser19) is a Phosphoserine. Positions 38-62 are disordered; that stretch reads GGGIAPRDLPSPLPTKRTRTYSATA. The 68-residue stretch at 69–136 folds into the CSD domain; it reads VFKGVCKQFS…KFQAVEVVLT (68 aa).

Its subcellular location is the nucleus. It is found in the cytoplasm. RNA-binding factor which binds specifically to the very 3'-UTR ends of both histone H1 and H3.3 mRNAs, encompassing the polyadenylation signal. Might play a central role in the negative regulation of histone variant synthesis in the developing brain. The chain is Cold shock domain-containing protein C2 (Csdc2) from Mus musculus (Mouse).